The sequence spans 204 residues: MNRPLIVASLPVTSPGDISRVKDIDADLVELRLDYSREFPRPQDLLPYRDRILVTLRDREEGGQGNFTDNFKETFLNELMKLGILYDVEASFLSRRRVQFREKVVSAHYFHRLPSREEVDCLFSTYREAFTVKIAVSNLPGYREILSYISTKPGSTFMPMSPDPLERLAISLLGSRLLYTYVDSPTATGQLHYLEAKRILNCLF.

3-dehydroquinate is bound by residues serine 9, 30 to 32 (ELR), and arginine 57. Histidine 108 serves as the catalytic Proton donor/acceptor. Residue lysine 133 is the Schiff-base intermediate with substrate of the active site. 3-dehydroquinate contacts are provided by arginine 167, threonine 186, and glutamine 190.

The protein belongs to the type-I 3-dehydroquinase family. As to quaternary structure, homodimer.

The enzyme catalyses 3-dehydroquinate = 3-dehydroshikimate + H2O. It functions in the pathway metabolic intermediate biosynthesis; chorismate biosynthesis; chorismate from D-erythrose 4-phosphate and phosphoenolpyruvate: step 3/7. Its function is as follows. Involved in the third step of the chorismate pathway, which leads to the biosynthesis of aromatic amino acids. Catalyzes the cis-dehydration of 3-dehydroquinate (DHQ) and introduces the first double bond of the aromatic ring to yield 3-dehydroshikimate. The chain is 3-dehydroquinate dehydratase from Metallosphaera sedula (strain ATCC 51363 / DSM 5348 / JCM 9185 / NBRC 15509 / TH2).